The following is a 104-amino-acid chain: Precursor of CEP11 (104 aa).

An N-terminal signal peptide occupies residues 1–27 (MAKTRRVIYLFLTIVLLFCELIDEAQG). Positions 28-85 (SRFRCHHSEDYSCKKRSSHHHHHHHHHQQQQHHHKDTPPEELQGSIKTRRSKDIYGLN) are excised as a propeptide. The segment at 37-104 (DYSCKKRSSH…SPGVGHLIKT (68 aa)) is disordered. The segment covering 41–62 (KKRSSHHHHHHHHHQQQQHHHK) has biased composition (basic residues). Pro-92 and Pro-96 each carry hydroxyproline. Positions 101 to 104 (LIKT) are excised as a propeptide.

The protein belongs to the C-terminally encoded plant signaling peptide (CEP) family. In terms of assembly, interacts with CEP receptors (e.g. CEPR1 and CEPR2). Post-translationally, the mature small signaling peptide is generated by proteolytic processing of the longer precursor. Expressed in lateral root primordia and in lateral roots excluding the meristem region.

The protein resides in the secreted. It is found in the extracellular space. The protein localises to the apoplast. In terms of biological role, extracellular signaling peptide that may regulate primary root growth rate and systemic nitrogen (N)-demand signaling. Mediates up-regulation of genes involved in N uptake and assimilation pathways. This is Precursor of CEP11 from Arabidopsis thaliana (Mouse-ear cress).